The following is a 144-amino-acid chain: MLNIEQIKEIIPHRYPFLLVDKILEVDEGKRAVGIKNVSANEEFFNGHFPDYAVMPGVLIVEALAQVGAVAVLKKEENRGRLAFFAGIDNCRFKKQVRPGDQLRLEVEMTRVRGPIGKGKAIATVDGEIACEAEITFAIGDKKE.

His48 is a catalytic residue.

It belongs to the thioester dehydratase family. FabZ subfamily.

It is found in the cytoplasm. The catalysed reaction is a (3R)-hydroxyacyl-[ACP] = a (2E)-enoyl-[ACP] + H2O. Functionally, involved in unsaturated fatty acids biosynthesis. Catalyzes the dehydration of short chain beta-hydroxyacyl-ACPs and long chain saturated and unsaturated beta-hydroxyacyl-ACPs. In Bacillus cereus (strain AH187), this protein is 3-hydroxyacyl-[acyl-carrier-protein] dehydratase FabZ.